The following is a 312-amino-acid chain: Acetyl-coenzyme A carboxylase carboxyl transferase subunit alpha (312 aa).

Residues 36 to 286 enclose the CoA carboxyltransferase C-terminal domain; the sequence is RLDKEVKSIY…KEYFLDALRT (251 aa).

The protein belongs to the AccA family. As to quaternary structure, acetyl-CoA carboxylase is a heterohexamer composed of biotin carboxyl carrier protein (AccB), biotin carboxylase (AccC) and two subunits each of ACCase subunit alpha (AccA) and ACCase subunit beta (AccD).

Its subcellular location is the cytoplasm. The enzyme catalyses N(6)-carboxybiotinyl-L-lysyl-[protein] + acetyl-CoA = N(6)-biotinyl-L-lysyl-[protein] + malonyl-CoA. Its pathway is lipid metabolism; malonyl-CoA biosynthesis; malonyl-CoA from acetyl-CoA: step 1/1. Component of the acetyl coenzyme A carboxylase (ACC) complex. First, biotin carboxylase catalyzes the carboxylation of biotin on its carrier protein (BCCP) and then the CO(2) group is transferred by the carboxyltransferase to acetyl-CoA to form malonyl-CoA. The protein is Acetyl-coenzyme A carboxylase carboxyl transferase subunit alpha of Helicobacter pylori (strain ATCC 700392 / 26695) (Campylobacter pylori).